The chain runs to 617 residues: tRNA 5-methylaminomethyl-2-thiouridine biosynthesis bifunctional protein MnmC (617 aa).

Positions 1-226 (MLDWQNGQLY…KREMLQGDLP (226 aa)) are tRNA (mnm(5)s(2)U34)-methyltransferase. An FAD-dependent cmnm(5)s(2)U34 oxidoreductase region spans residues 241 to 617 (IGGGIAGCAA…SPAIPVSIKG (377 aa)).

It in the N-terminal section; belongs to the methyltransferase superfamily. tRNA (mnm(5)s(2)U34)-methyltransferase family. The protein in the C-terminal section; belongs to the DAO family. FAD serves as cofactor.

The protein localises to the cytoplasm. The catalysed reaction is 5-aminomethyl-2-thiouridine(34) in tRNA + S-adenosyl-L-methionine = 5-methylaminomethyl-2-thiouridine(34) in tRNA + S-adenosyl-L-homocysteine + H(+). In terms of biological role, catalyzes the last two steps in the biosynthesis of 5-methylaminomethyl-2-thiouridine (mnm(5)s(2)U) at the wobble position (U34) in tRNA. Catalyzes the FAD-dependent demodification of cmnm(5)s(2)U34 to nm(5)s(2)U34, followed by the transfer of a methyl group from S-adenosyl-L-methionine to nm(5)s(2)U34, to form mnm(5)s(2)U34. This is tRNA 5-methylaminomethyl-2-thiouridine biosynthesis bifunctional protein MnmC from Nitrosospira multiformis (strain ATCC 25196 / NCIMB 11849 / C 71).